The chain runs to 574 residues: Proline--tRNA ligase (574 aa).

The protein belongs to the class-II aminoacyl-tRNA synthetase family. ProS type 1 subfamily. As to quaternary structure, homodimer.

The protein localises to the cytoplasm. The enzyme catalyses tRNA(Pro) + L-proline + ATP = L-prolyl-tRNA(Pro) + AMP + diphosphate. Catalyzes the attachment of proline to tRNA(Pro) in a two-step reaction: proline is first activated by ATP to form Pro-AMP and then transferred to the acceptor end of tRNA(Pro). As ProRS can inadvertently accommodate and process non-cognate amino acids such as alanine and cysteine, to avoid such errors it has two additional distinct editing activities against alanine. One activity is designated as 'pretransfer' editing and involves the tRNA(Pro)-independent hydrolysis of activated Ala-AMP. The other activity is designated 'posttransfer' editing and involves deacylation of mischarged Ala-tRNA(Pro). The misacylated Cys-tRNA(Pro) is not edited by ProRS. This Ralstonia nicotianae (strain ATCC BAA-1114 / GMI1000) (Ralstonia solanacearum) protein is Proline--tRNA ligase.